Reading from the N-terminus, the 273-residue chain is Bis(5'-nucleosyl)-tetraphosphatase, symmetrical (273 aa).

Belongs to the Ap4A hydrolase family.

It carries out the reaction P(1),P(4)-bis(5'-adenosyl) tetraphosphate + H2O = 2 ADP + 2 H(+). Hydrolyzes diadenosine 5',5'''-P1,P4-tetraphosphate to yield ADP. This Histophilus somni (strain 129Pt) (Haemophilus somnus) protein is Bis(5'-nucleosyl)-tetraphosphatase, symmetrical.